A 144-amino-acid polypeptide reads, in one-letter code: Large ribosomal subunit protein uL16 (144 aa).

This sequence belongs to the universal ribosomal protein uL16 family. Part of the 50S ribosomal subunit.

Functionally, binds 23S rRNA and is also seen to make contacts with the A and possibly P site tRNAs. The polypeptide is Large ribosomal subunit protein uL16 (Enterococcus faecalis (strain ATCC 700802 / V583)).